A 91-amino-acid chain; its full sequence is YcgL domain-containing protein Ent638_2370 (91 aa).

Residues 1–85 (MFCVIYRSAK…PPENLLKQHL (85 aa)) form the YcgL domain.

This chain is YcgL domain-containing protein Ent638_2370, found in Enterobacter sp. (strain 638).